Here is a 421-residue protein sequence, read N- to C-terminus: UDP-N-acetylglucosamine 1-carboxyvinyltransferase 1 (421 aa).

Residue 22–23 (KN) participates in phosphoenolpyruvate binding. UDP-N-acetyl-alpha-D-glucosamine is bound at residue Arg-95. Cys-119 functions as the Proton donor in the catalytic mechanism. Position 119 is a 2-(S-cysteinyl)pyruvic acid O-phosphothioketal (Cys-119). UDP-N-acetyl-alpha-D-glucosamine contacts are provided by residues 124–128 (RPIEQ), Asp-308, and Val-330.

The protein belongs to the EPSP synthase family. MurA subfamily.

The protein resides in the cytoplasm. It catalyses the reaction phosphoenolpyruvate + UDP-N-acetyl-alpha-D-glucosamine = UDP-N-acetyl-3-O-(1-carboxyvinyl)-alpha-D-glucosamine + phosphate. It participates in cell wall biogenesis; peptidoglycan biosynthesis. Functionally, cell wall formation. Adds enolpyruvyl to UDP-N-acetylglucosamine. The polypeptide is UDP-N-acetylglucosamine 1-carboxyvinyltransferase 1 (Staphylococcus aureus (strain MW2)).